The sequence spans 306 residues: Pantothenate kinase (306 aa).

Position 91-98 (91-98 (GSVAVGKS)) interacts with ATP.

This sequence belongs to the prokaryotic pantothenate kinase family.

The protein localises to the cytoplasm. The enzyme catalyses (R)-pantothenate + ATP = (R)-4'-phosphopantothenate + ADP + H(+). It functions in the pathway cofactor biosynthesis; coenzyme A biosynthesis; CoA from (R)-pantothenate: step 1/5. This Streptococcus pyogenes serotype M18 (strain MGAS8232) protein is Pantothenate kinase (coaA).